We begin with the raw amino-acid sequence, 298 residues long: GTP cyclohydrolase FolE2 (298 aa).

It belongs to the GTP cyclohydrolase IV family.

The enzyme catalyses GTP + H2O = 7,8-dihydroneopterin 3'-triphosphate + formate + H(+). It functions in the pathway cofactor biosynthesis; 7,8-dihydroneopterin triphosphate biosynthesis; 7,8-dihydroneopterin triphosphate from GTP: step 1/1. Its function is as follows. Converts GTP to 7,8-dihydroneopterin triphosphate. This chain is GTP cyclohydrolase FolE2, found in Neisseria meningitidis serogroup B (strain ATCC BAA-335 / MC58).